A 206-amino-acid chain; its full sequence is LexA repressor (206 aa).

Residues 28–48 (RAEIAKRLGFKSANAAEEHLK) constitute a DNA-binding region (H-T-H motif). Residues S123 and K160 each act as for autocatalytic cleavage activity in the active site.

Belongs to the peptidase S24 family. As to quaternary structure, homodimer.

It carries out the reaction Hydrolysis of Ala-|-Gly bond in repressor LexA.. Represses a number of genes involved in the response to DNA damage (SOS response), including recA and lexA. In the presence of single-stranded DNA, RecA interacts with LexA causing an autocatalytic cleavage which disrupts the DNA-binding part of LexA, leading to derepression of the SOS regulon and eventually DNA repair. The protein is LexA repressor of Shewanella sediminis (strain HAW-EB3).